Reading from the N-terminus, the 39-residue chain is Cytochrome b559 subunit beta (39 aa).

Residues tryptophan 14–serine 30 form a helical membrane-spanning segment. Histidine 18 is a heme binding site.

This sequence belongs to the PsbE/PsbF family. In terms of assembly, heterodimer of an alpha subunit and a beta subunit. PSII is composed of 1 copy each of membrane proteins PsbA, PsbB, PsbC, PsbD, PsbE, PsbF, PsbH, PsbI, PsbJ, PsbK, PsbL, PsbM, PsbT, PsbX, PsbY, PsbZ, Psb30/Ycf12, at least 3 peripheral proteins of the oxygen-evolving complex and a large number of cofactors. It forms dimeric complexes. The cofactor is heme b.

It is found in the plastid. The protein localises to the chloroplast thylakoid membrane. Functionally, this b-type cytochrome is tightly associated with the reaction center of photosystem II (PSII). PSII is a light-driven water:plastoquinone oxidoreductase that uses light energy to abstract electrons from H(2)O, generating O(2) and a proton gradient subsequently used for ATP formation. It consists of a core antenna complex that captures photons, and an electron transfer chain that converts photonic excitation into a charge separation. In Beta vulgaris (Sugar beet), this protein is Cytochrome b559 subunit beta.